Here is a 537-residue protein sequence, read N- to C-terminus: Inositol phosphorylceramide glucuronosyltransferase 1 (537 aa).

A helical membrane pass occupies residues 6–26; it reads TSLWVLLLALVSIQLNGSFGS. 2 residues coordinate Mn(2+): Asp124 and Asp126. Substrate-binding positions include 124 to 126, 153 to 155, 180 to 184, and 248 to 255; these read DAD, NSG, TGGDQ, and HYTLGPLK. His248 lines the Mn(2+) pocket. The next 5 helical transmembrane spans lie at 293–313, 375–395, 406–426, 468–488, and 494–514; these read DELVVKFLFLLPLCALLFCIY, VSVVVCFTAVLLSLGISFAIV, VLVYEWTFTIFFLLFGVFLLF, MAFLAIAAVSLPYILGITALF, and MVGLAIILAAFMTYASEHLAV.

It belongs to the glycosyltransferase 8 family. Glycogenin subfamily. It depends on Mn(2+) as a cofactor. In terms of tissue distribution, expressed in seedlings, roots, leaves, stems and siliques.

The protein localises to the golgi apparatus membrane. It carries out the reaction glucuronate acceptor + UDP-alpha-D-glucuronate = acceptor beta-D-glucuronoside + UDP + H(+). The enzyme catalyses a 1D-myo-inositol-1-phospho-N-[(R)-2-hydroxy-very-long-chain fatty acyl]-(R)-4-hydroxysphingoid base + UDP-alpha-D-glucuronate = an alpha-D-glucuronosyl-(1&lt;-&gt;6)-1D-myo-inositol-1-phospho-N-[(R)-2-hydroxy-very-long-chain fatty acyl]-(R)-4-hydroxysphingoid base + UDP + H(+). The protein operates within sphingolipid metabolism. Mediates the transfer of glucuronic acid (GlcA) from UDP-GlcA to glycosyl inositol phosphorylceramides (GIPCs). The formation of GIPCs sphingolipids is essential for pollen function, plant growth and defense. Required for global fitness. In Arabidopsis thaliana (Mouse-ear cress), this protein is Inositol phosphorylceramide glucuronosyltransferase 1.